The primary structure comprises 40 residues: Large ribosomal subunit protein bL36A (40 aa).

This sequence belongs to the bacterial ribosomal protein bL36 family.

The chain is Large ribosomal subunit protein bL36A from Saccharopolyspora erythraea (strain ATCC 11635 / DSM 40517 / JCM 4748 / NBRC 13426 / NCIMB 8594 / NRRL 2338).